Here is a 136-residue protein sequence, read N- to C-terminus: Small ribosomal subunit protein uS9 (136 aa).

Belongs to the universal ribosomal protein uS9 family.

The chain is Small ribosomal subunit protein uS9 from Borrelia duttonii (strain Ly).